The primary structure comprises 152 residues: Large ribosomal subunit protein bL9 (152 aa).

Residues 41–61 (QSAMSQLNAERKAEQRREAEE) form a disordered region. Positions 49-61 (AERKAEQRREAEE) are enriched in basic and acidic residues.

It belongs to the bacterial ribosomal protein bL9 family.

Functionally, binds to the 23S rRNA. This is Large ribosomal subunit protein bL9 from Levilactobacillus brevis (strain ATCC 367 / BCRC 12310 / CIP 105137 / JCM 1170 / LMG 11437 / NCIMB 947 / NCTC 947) (Lactobacillus brevis).